The chain runs to 295 residues: Urease accessory protein UreD (295 aa).

The protein belongs to the UreD family. UreD, UreF and UreG form a complex that acts as a GTP-hydrolysis-dependent molecular chaperone, activating the urease apoprotein by helping to assemble the nickel containing metallocenter of UreC. The UreE protein probably delivers the nickel.

It localises to the cytoplasm. Functionally, required for maturation of urease via the functional incorporation of the urease nickel metallocenter. The polypeptide is Urease accessory protein UreD (Saccharophagus degradans (strain 2-40 / ATCC 43961 / DSM 17024)).